Reading from the N-terminus, the 369-residue chain is Queuine tRNA-ribosyltransferase (369 aa).

Catalysis depends on Asp89, which acts as the Proton acceptor. Substrate contacts are provided by residues 89-93 (DSGGF), Asp143, Gln187, and Gly214. Residues 245–251 (GVGTPED) are RNA binding. The active-site Nucleophile is Asp264. The segment at 269 to 273 (TRNAR) is RNA binding; important for wobble base 34 recognition. Zn(2+) contacts are provided by Cys302, Cys304, Cys307, and His333.

This sequence belongs to the queuine tRNA-ribosyltransferase family. As to quaternary structure, homodimer. Within each dimer, one monomer is responsible for RNA recognition and catalysis, while the other monomer binds to the replacement base PreQ1. Requires Zn(2+) as cofactor.

It carries out the reaction 7-aminomethyl-7-carbaguanine + guanosine(34) in tRNA = 7-aminomethyl-7-carbaguanosine(34) in tRNA + guanine. The protein operates within tRNA modification; tRNA-queuosine biosynthesis. In terms of biological role, catalyzes the base-exchange of a guanine (G) residue with the queuine precursor 7-aminomethyl-7-deazaguanine (PreQ1) at position 34 (anticodon wobble position) in tRNAs with GU(N) anticodons (tRNA-Asp, -Asn, -His and -Tyr). Catalysis occurs through a double-displacement mechanism. The nucleophile active site attacks the C1' of nucleotide 34 to detach the guanine base from the RNA, forming a covalent enzyme-RNA intermediate. The proton acceptor active site deprotonates the incoming PreQ1, allowing a nucleophilic attack on the C1' of the ribose to form the product. After dissociation, two additional enzymatic reactions on the tRNA convert PreQ1 to queuine (Q), resulting in the hypermodified nucleoside queuosine (7-(((4,5-cis-dihydroxy-2-cyclopenten-1-yl)amino)methyl)-7-deazaguanosine). This is Queuine tRNA-ribosyltransferase from Dechloromonas aromatica (strain RCB).